The primary structure comprises 421 residues: CaM kinase-like vesicle-associated protein (421 aa).

The region spanning 24–284 is the Protein kinase domain; sequence YDLGQVVKSE…AQEAIAHEWI (261 aa). The segment at 326 to 421 is disordered; that stretch reads ASEQGDTGAS…PQMLPQRKGY (96 aa). 2 stretches are compositionally biased toward low complexity: residues 330–340 and 390–406; these read GDTGASGLAAG and QQQA…QQAR.

It belongs to the protein kinase superfamily. CAMK Ser/Thr protein kinase family. In terms of assembly, interacts with calmodulin, in the presence of calcium. It depends on Ca(2+) as a cofactor. As to expression, ubiquitously expressed.

It is found in the cytoplasmic vesicle membrane. Its function is as follows. Does not appear to have detectable kinase activity. The chain is CaM kinase-like vesicle-associated protein (camkv) from Takifugu rubripes (Japanese pufferfish).